Reading from the N-terminus, the 246-residue chain is MTSSLSRPSGRRADELRKVALTRHYTKHAEGSVLVEFGDTKVICTASVAERVPEFLRDRGQGWLTAEYGMLPRATHTRSDREAARGKQTGRTQEIQRLIGRALRAVFDLEALGPRTIHIDCDVIQADGGTRTASITGAFVAAHDAVSKLIAAGKLARSPITDHVAAISVGVYEGVPLLDLDYAEDSRCDTDMNVVMTGAGGFVEVQGTAEGVPFSRAEMNALLDLAQSGIGQLVQLQKDVLGAGHV.

Residues R91 and 129–131 contribute to the phosphate site; that span reads GTR.

Belongs to the RNase PH family. Homohexameric ring arranged as a trimer of dimers.

The catalysed reaction is tRNA(n+1) + phosphate = tRNA(n) + a ribonucleoside 5'-diphosphate. Functionally, phosphorolytic 3'-5' exoribonuclease that plays an important role in tRNA 3'-end maturation. Removes nucleotide residues following the 3'-CCA terminus of tRNAs; can also add nucleotides to the ends of RNA molecules by using nucleoside diphosphates as substrates, but this may not be physiologically important. Probably plays a role in initiation of 16S rRNA degradation (leading to ribosome degradation) during starvation. The chain is Ribonuclease PH from Burkholderia ambifaria (strain MC40-6).